The primary structure comprises 370 residues: Dihydroorotate dehydrogenase (quinone) (370 aa).

FMN contacts are provided by residues 80–84 (AGFDK) and Thr104. Substrate is bound at residue Lys84. 129–133 (NRMGF) lines the substrate pocket. FMN is bound by residues Asn157 and Asn190. Asn190 provides a ligand contact to substrate. The Nucleophile role is filled by Ser193. Asn195 contributes to the substrate binding site. Residues Lys226 and Thr254 each contribute to the FMN site. 255-256 (NT) lines the substrate pocket. FMN is bound by residues Gly278, Gly307, and 328 to 329 (YT).

This sequence belongs to the dihydroorotate dehydrogenase family. Type 2 subfamily. As to quaternary structure, monomer. The cofactor is FMN.

The protein localises to the cell membrane. The enzyme catalyses (S)-dihydroorotate + a quinone = orotate + a quinol. Its pathway is pyrimidine metabolism; UMP biosynthesis via de novo pathway; orotate from (S)-dihydroorotate (quinone route): step 1/1. Functionally, catalyzes the conversion of dihydroorotate to orotate with quinone as electron acceptor. The chain is Dihydroorotate dehydrogenase (quinone) from Mycolicibacterium paratuberculosis (strain ATCC BAA-968 / K-10) (Mycobacterium paratuberculosis).